A 279-amino-acid polypeptide reads, in one-letter code: Nitrate import permease protein NrtB (279 aa).

5 consecutive transmembrane segments (helical) span residues 25–45 (FLPY…ISAI), 91–111 (VAIG…VLGM), 149–169 (AIFV…AVGI), 200–220 (VPYV…AIVA), and 249–269 (IILA…LVAW). Positions 84–267 (ILISLQRVAI…LVGLSLDRLV (184 aa)) constitute an ABC transmembrane type-1 domain.

Belongs to the binding-protein-dependent transport system permease family. CysTW subfamily. The complex is composed of two ATP-binding proteins (NrtC and NrtD), two transmembrane proteins (NrtB) and a solute-binding protein (NrtA).

Its subcellular location is the cell inner membrane. Part of the ABC transporter complex NrtABCD involved in nitrate uptake. The complex is probably also involved in nitrite transport. Probably responsible for the translocation of the substrate across the membrane. The polypeptide is Nitrate import permease protein NrtB (Synechococcus elongatus (strain ATCC 33912 / PCC 7942 / FACHB-805) (Anacystis nidulans R2)).